The sequence spans 397 residues: MEELQEPLRGQLRLCFTQAARTSLLLLRLNDAALRALQECQRQQVRPVIAFQGHRGYLRLPGPGWSCLFSFIVSQCCQEGAGGSLDLVCQRFLRSGPNSLHCLGSLRERLIIWAAMDSIPAPSSVQGHNLTEDARHPESWQNTGGYSEGDAVSQPQMALEEVSVSDPLASNQGQSLPGSSREHMAQWEVRSQTHVPNREPVQALPSSASRKRLDKKRSVPVATVELEEKRFRTLPLVPSPLQGLTNQDLQEGEDWEQEDEDMDPRLEHSSSVQEDSESPSPEDIPDYLLQYRAIHSAEQQHAYEQDFETDYAEYRILHARVGTASQRFIELGAEIKRVRRGTPEYKVLEDKIIQEYKKFRKQYPSYREEKRRCEYLHQKLSHIKGLILEFEEKNRGS.

Disordered regions lie at residues 164-219 (VSDP…KRSV) and 237-284 (VPSP…PEDI). Over residues 168-178 (LASNQGQSLPG) the composition is skewed to polar residues. A compositionally biased stretch (acidic residues) spans 250–262 (QEGEDWEQEDEDM). Positions 269-281 (SSSVQEDSESPSP) are enriched in low complexity. The 111-residue stretch at 285 to 395 (PDYLLQYRAI…LILEFEEKNR (111 aa)) folds into the OCEL domain.

It belongs to the ELL/occludin family. As to quaternary structure, interacts with AFF4. Component of the super elongation complex (SEC), at least composed of EAF1, EAF2, CDK9, MLLT3/AF9, AFF (AFF1 or AFF4), the P-TEFb complex and ELL (ELL, ELL2 or ELL3). Component of the little elongation complex (LEC), at least composed of ELL (ELL, ELL2 or ELL3), ZC3H8, ICE1 and ICE2. In terms of tissue distribution, testis specific.

The protein localises to the nucleus. In terms of biological role, enhancer-binding elongation factor that specifically binds enhancers in embryonic stem cells (ES cells), marks them, and is required for their future activation during stem cell specification. Does not only bind to enhancer regions of active genes, but also marks the enhancers that are in a poised or inactive state in ES cells and is required for establishing proper RNA polymerase II occupancy at developmentally regulated genes in a cohesin-dependent manner. Probably required for priming developmentally regulated genes for later recruitment of the super elongation complex (SEC), for transcriptional activation during differentiation. Required for recruitment of P-TEFb within SEC during differentiation. Probably preloaded on germ cell chromatin, suggesting that it may prime gene activation by marking enhancers as early as in the germ cells. Promoting epithelial-mesenchymal transition (EMT). Elongation factor component of the super elongation complex (SEC), a complex required to increase the catalytic rate of RNA polymerase II transcription by suppressing transient pausing by the polymerase at multiple sites along the DNA. Component of the little elongation complex (LEC), a complex required to regulate small nuclear RNA (snRNA) gene transcription by RNA polymerase II and III. The chain is RNA polymerase II elongation factor ELL3 (ELL3) from Homo sapiens (Human).